Reading from the N-terminus, the 296-residue chain is uncharacterized protein (296 aa).

Residues 1–21 (MIFAVVDILEISIQLLCILLF) traverse the membrane as a helical segment.

It is found in the membrane. This is an uncharacterized protein from Caenorhabditis elegans.